The chain runs to 300 residues: MNQSYGRLVSRAAIAATAMASLLLLIKIFAWWYTGSVSILAALVDSLVDIGASLTNLLVVRYSLQPADDNHSFGHGKAESLAALAQSMFISGSALFLFLTGIQHLISPTPMIDPGVGVIVTIVALICTIILVSFQRWVVRRTQSQAVRADMLHYQSDVMMNGAILLALGLSWYGWHRADALFALGIGIYILYSALRMGYEAVQSLLDRALPDEERQEIIDIVTSWPGVSGAHDLRTRQSGPTRFIQIHLEMEDSLPLVQAHMVADQVEQAILRRFPGSDVIIHQDPCSVVPREGKRSMLS.

4 consecutive transmembrane segments (helical) span residues 12 to 32 (AAIA…FAWW), 39 to 59 (ILAA…NLLV), 82 to 102 (AALA…LTGI), and 114 to 134 (PGVG…LVSF). 2 residues coordinate Zn(2+): Asp45 and Asp49. Residues His153 and Asp157 each coordinate Zn(2+). 2 helical membrane passes run 156–176 (SDVM…YGWH) and 178–198 (ADAL…LRMG).

The protein belongs to the cation diffusion facilitator (CDF) transporter (TC 2.A.4) family. FieF subfamily. As to quaternary structure, homodimer.

The protein resides in the cell inner membrane. It carries out the reaction Zn(2+)(in) + H(+)(out) = Zn(2+)(out) + H(+)(in). The catalysed reaction is Cd(2+)(in) + H(+)(out) = Cd(2+)(out) + H(+)(in). It catalyses the reaction Fe(2+)(in) + H(+)(out) = Fe(2+)(out) + H(+)(in). In terms of biological role, divalent metal cation transporter which exports Zn(2+), Cd(2+) and possibly Fe(2+). May be involved in zinc and iron detoxification by efflux. This is Cation-efflux pump FieF from Shigella boydii serotype 18 (strain CDC 3083-94 / BS512).